Reading from the N-terminus, the 214-residue chain is Threonylcarbamoyl-AMP synthase (214 aa).

The YrdC-like domain occupies 9-214 (TDSTIQAATW…GDALTGQVIR (206 aa)).

This sequence belongs to the SUA5 family. TsaC subfamily.

Its subcellular location is the cytoplasm. The enzyme catalyses L-threonine + hydrogencarbonate + ATP = L-threonylcarbamoyladenylate + diphosphate + H2O. Its function is as follows. Required for the formation of a threonylcarbamoyl group on adenosine at position 37 (t(6)A37) in tRNAs that read codons beginning with adenine. Catalyzes the conversion of L-threonine, HCO(3)(-)/CO(2) and ATP to give threonylcarbamoyl-AMP (TC-AMP) as the acyladenylate intermediate, with the release of diphosphate. The protein is Threonylcarbamoyl-AMP synthase of Psychrobacter cryohalolentis (strain ATCC BAA-1226 / DSM 17306 / VKM B-2378 / K5).